Consider the following 45-residue polypeptide: Small polypeptide DEVIL 23 (45 aa).

A required for DVL/RTFL small polypeptide activity region spans residues 13–44 (KSTLRCWDWCKEQRTRAYIIWRCLIFLLRWDD). The helical transmembrane segment at 22 to 39 (CKEQRTRAYIIWRCLIFL) threads the bilayer.

The protein belongs to the DVL/RTFL small polypeptides family.

The protein resides in the cell membrane. Its function is as follows. Small polypeptide acting as a regulatory molecule which coordinates cellular responses required for differentiation, growth and development, probably by restricting polar cell proliferation in lateral organs and coordinating socket cell recruitment and differentiation at trichome sites. The protein is Small polypeptide DEVIL 23 of Arabidopsis thaliana (Mouse-ear cress).